Here is a 463-residue protein sequence, read N- to C-terminus: 3-isopropylmalate dehydratase large subunit (463 aa).

3 residues coordinate [4Fe-4S] cluster: Cys-347, Cys-407, and Cys-410.

This sequence belongs to the aconitase/IPM isomerase family. LeuC type 1 subfamily. As to quaternary structure, heterodimer of LeuC and LeuD. [4Fe-4S] cluster is required as a cofactor.

The catalysed reaction is (2R,3S)-3-isopropylmalate = (2S)-2-isopropylmalate. The protein operates within amino-acid biosynthesis; L-leucine biosynthesis; L-leucine from 3-methyl-2-oxobutanoate: step 2/4. In terms of biological role, catalyzes the isomerization between 2-isopropylmalate and 3-isopropylmalate, via the formation of 2-isopropylmaleate. The sequence is that of 3-isopropylmalate dehydratase large subunit from Buchnera aphidicola subsp. Cinara cedri (strain Cc).